The chain runs to 265 residues: UPF0294 protein KPK_4510 (265 aa).

The protein belongs to the UPF0294 family.

Its subcellular location is the cytoplasm. In Klebsiella pneumoniae (strain 342), this protein is UPF0294 protein KPK_4510.